A 519-amino-acid polypeptide reads, in one-letter code: Protein disulfide-isomerase A5 (519 aa).

A signal peptide spans 1 to 21 (MARAGPAWLLLAIWVVLPSWL). 4 cysteine pairs are disulfide-bonded: C85–C94, C182–C185, C305–C308, and C426–C429. 3 Thioredoxin domains span residues 134–261 (FLKD…NPQP), 270–384 (PWAD…NPEA), and 378–506 (WMQN…ALRE). The Prevents secretion from ER signature appears at 516–519 (KEEL).

The protein belongs to the protein disulfide isomerase family. Interacts with CALR (via P-domain).

It is found in the endoplasmic reticulum lumen. The catalysed reaction is Catalyzes the rearrangement of -S-S- bonds in proteins.. In Homo sapiens (Human), this protein is Protein disulfide-isomerase A5 (PDIA5).